The following is a 183-amino-acid chain: Probable cobalt-precorrin-6B C(15)-methyltransferase (decarboxylating) (183 aa).

Residues Thr-19, 43 to 47, Asp-64, and Ala-92 each bind S-adenosyl-L-methionine; that span reads GCGSG.

Belongs to the methyltransferase superfamily. Archaeal-type CbiT family.

The catalysed reaction is Co-precorrin-6B + S-adenosyl-L-methionine = Co-precorrin-7 + S-adenosyl-L-homocysteine + CO2. It functions in the pathway cofactor biosynthesis; adenosylcobalamin biosynthesis; cob(II)yrinate a,c-diamide from sirohydrochlorin (anaerobic route): step 8/10. Its function is as follows. Catalyzes the methylation of C-15 in cobalt-precorrin-6B followed by the decarboxylation of C-12 to form cobalt-precorrin-7. The protein is Probable cobalt-precorrin-6B C(15)-methyltransferase (decarboxylating) of Methanocaldococcus jannaschii (strain ATCC 43067 / DSM 2661 / JAL-1 / JCM 10045 / NBRC 100440) (Methanococcus jannaschii).